The primary structure comprises 413 residues: NADH:flavin oxidoreductase FG08077 (413 aa).

Residue 53-56 (APLC) participates in FMN binding. A substrate-binding site is contributed by Tyr-58. Residues Ala-88 and Gln-130 each contribute to the FMN site. Substrate is bound at residue 211-214 (HAAH). FMN is bound by residues Arg-264 and 370–371 (GR).

This sequence belongs to the NADH:flavin oxidoreductase/NADH oxidase family. NamA subfamily. It depends on FMN as a cofactor.

The protein operates within mycotoxin biosynthesis. Functionally, NADH:flavin oxidoreductase; part of the gene cluster that mediates the biosynthesis of butenolide, a mycotoxin that shows antibiotic activity but does not seem to play a major role in the spread of head blight in wheat. Butenolide is derived from glutamic acid via a 4-acetamido-2-butenoic acid intermediate. The predicted function of the NADH:flavin oxidoreductase FG08077, the cytochrome P450 monooxygenase FG08079, the decarboxylase FG08083, and the putative acetyltransferase FG08082 are consistent with this pathway, however, the respective activities of the butelonide biosynthesis cluster enzymes have still to be experimentally determined. The chain is NADH:flavin oxidoreductase FG08077 from Gibberella zeae (strain ATCC MYA-4620 / CBS 123657 / FGSC 9075 / NRRL 31084 / PH-1) (Wheat head blight fungus).